We begin with the raw amino-acid sequence, 943 residues long: Isoleucine--tRNA ligase (943 aa).

Residues 59-69 carry the 'HIGH' region motif; sequence PYANGQIHLGH. Residue Glu-577 participates in L-isoleucyl-5'-AMP binding. Residues 618–622 carry the 'KMSKS' region motif; sequence KMSKS. An ATP-binding site is contributed by Lys-621. Zn(2+)-binding residues include Cys-906, Cys-909, Cys-926, and Cys-929.

The protein belongs to the class-I aminoacyl-tRNA synthetase family. IleS type 1 subfamily. Monomer. The cofactor is Zn(2+).

It is found in the cytoplasm. It carries out the reaction tRNA(Ile) + L-isoleucine + ATP = L-isoleucyl-tRNA(Ile) + AMP + diphosphate. In terms of biological role, catalyzes the attachment of isoleucine to tRNA(Ile). As IleRS can inadvertently accommodate and process structurally similar amino acids such as valine, to avoid such errors it has two additional distinct tRNA(Ile)-dependent editing activities. One activity is designated as 'pretransfer' editing and involves the hydrolysis of activated Val-AMP. The other activity is designated 'posttransfer' editing and involves deacylation of mischarged Val-tRNA(Ile). This is Isoleucine--tRNA ligase from Xanthomonas campestris pv. campestris (strain B100).